A 449-amino-acid polypeptide reads, in one-letter code: 23S rRNA (uracil(1939)-C(5))-methyltransferase RlmD (449 aa).

The TRAM domain occupies 12 to 70; the sequence is SKQLSAKQSFSVHQLDHLGAGIAQHQGKVVFIPGALPNETVQAQLTEQKKNYARAKLIK. Residues Cys83, Cys89, Cys92, and Cys170 each contribute to the [4Fe-4S] cluster site. S-adenosyl-L-methionine contacts are provided by Gln282, Phe311, Asn316, Glu332, Asp359, and Asp379. The active-site Nucleophile is the Cys405.

Belongs to the class I-like SAM-binding methyltransferase superfamily. RNA M5U methyltransferase family. RlmD subfamily.

The catalysed reaction is uridine(1939) in 23S rRNA + S-adenosyl-L-methionine = 5-methyluridine(1939) in 23S rRNA + S-adenosyl-L-homocysteine + H(+). In terms of biological role, catalyzes the formation of 5-methyl-uridine at position 1939 (m5U1939) in 23S rRNA. In Shewanella sp. (strain ANA-3), this protein is 23S rRNA (uracil(1939)-C(5))-methyltransferase RlmD.